Reading from the N-terminus, the 225-residue chain is Uracil-DNA glycosylase (225 aa).

Aspartate 68 functions as the Proton acceptor in the catalytic mechanism.

Belongs to the uracil-DNA glycosylase (UDG) superfamily. UNG family.

It is found in the cytoplasm. It catalyses the reaction Hydrolyzes single-stranded DNA or mismatched double-stranded DNA and polynucleotides, releasing free uracil.. Its function is as follows. Excises uracil residues from the DNA which can arise as a result of misincorporation of dUMP residues by DNA polymerase or due to deamination of cytosine. The chain is Uracil-DNA glycosylase from Mycolicibacterium vanbaalenii (strain DSM 7251 / JCM 13017 / BCRC 16820 / KCTC 9966 / NRRL B-24157 / PYR-1) (Mycobacterium vanbaalenii).